The following is a 264-amino-acid chain: Major prion protein (264 aa).

A signal peptide spans 1–24 (MVKRHIGSWILVLFVVMWSDVGLC). The interval 25 to 241 (KKRPKPGGGW…ESQAYYQRGA (217 aa)) is interaction with GRB2, ERI3 and SYN1. A disordered region spans residues 27–119 (RPKPGGGWNT…WNKPSKPKTN (93 aa)). Tandem repeats lie at residues 54–62 (SQGGGGWGQ), 63–70 (PHGGGWGQ), 71–78 (PHGGGWGQ), 79–86 (PHGGGWGQ), 87–94 (PHGGGWGQ), and 95–103 (PHGGGGWGQ). Residues 54–103 (SQGGGGWGQPHGGGWGQPHGGGWGQPHGGGWGQPHGGGWGQPHGGGGWGQ) form a 6 X 8 AA tandem repeats of P-H-G-G-G-W-G-Q region. Over residues 55–105 (QGGGGWGQPHGGGWGQPHGGGWGQPHGGGWGQPHGGGWGQPHGGGGWGQGG) the composition is skewed to gly residues. Cu(2+) is bound by residues His72, Gly73, Gly74, His80, Gly81, Gly82, His88, Gly89, Gly90, His96, Gly98, and Gly99. The cysteines at positions 190 and 225 are disulfide-linked. N-linked (GlcNAc...) asparagine glycans are attached at residues Asn192 and Asn208. Ala241 is lipidated: GPI-anchor amidated alanine. The propeptide at 242 to 264 (SVILFSSPPVILLISLLIFLIVG) is removed in mature form.

Belongs to the prion family. Monomer and homodimer. Has a tendency to aggregate into amyloid fibrils containing a cross-beta spine, formed by a steric zipper of superposed beta-strands. Soluble oligomers may represent an intermediate stage on the path to fibril formation. Copper binding may promote oligomerization. Interacts with GRB2, APP, ERI3/PRNPIP and SYN1. Mislocalized cytosolically exposed PrP interacts with MGRN1; this interaction alters MGRN1 subcellular location and causes lysosomal enlargement. Interacts with KIAA1191.

Its subcellular location is the cell membrane. The protein resides in the golgi apparatus. Functionally, its primary physiological function is unclear. Has cytoprotective activity against internal or environmental stresses. May play a role in neuronal development and synaptic plasticity. May be required for neuronal myelin sheath maintenance. May play a role in iron uptake and iron homeostasis. Soluble oligomers are toxic to cultured neuroblastoma cells and induce apoptosis (in vitro). Association with GPC1 (via its heparan sulfate chains) targets PRNP to lipid rafts. Also provides Cu(2+) or Zn(2+) for the ascorbate-mediated GPC1 deaminase degradation of its heparan sulfate side chains. This is Major prion protein (PRNP) from Bubalus bubalis (Domestic water buffalo).